The following is a 204-amino-acid chain: MEAEPERAEAPRRGGVAAVLKMGRRARQDIFAGENLSRKNSPSASLGEVPPPKPPRRQGGWADDPVLAPTKSGRKHAEEVEDHRLRQQSLEASDDGGDIPVIPDLEDVQDEDLAMQVAAPPSVQVNRVLTYHDLDKDLMKYAAFQTLDGEVDLKLLTKVLAPEHELREDDVSWDWDHLFTEVSSELVTEWDLGQSEREDHISLP.

Basic and acidic residues-rich tracts occupy residues 1–12 (MEAEPERAEAPR) and 75–85 (KHAEEVEDHRL). Residues 1–103 (MEAEPERAEA…DDGGDIPVIP (103 aa)) are disordered.

This sequence belongs to the IFT43 family. In terms of assembly, component of the IFT complex A (IFT-A) complex.

Its subcellular location is the cytoplasm. The protein resides in the cytoskeleton. It is found in the cell projection. The protein localises to the cilium. In terms of biological role, as a component of IFT complex A (IFT-A), a complex required for retrograde ciliary transport and entry into cilia of G protein-coupled receptors (GPCRs), it is involved in ciliogenesis. Involved in retrograde ciliary transport along microtubules from the ciliary tip to the base. This chain is Intraflagellar transport protein 43 homolog (IFT43), found in Taeniopygia guttata (Zebra finch).